Consider the following 328-residue polypeptide: Ethanol acetyltransferase 1 (328 aa).

An AB hydrolase-1 domain is found at 39–309 (PAIINIHGLL…TGHNLLLENP (271 aa)). Catalysis depends on charge relay system residues serine 115, aspartate 139, and histidine 302.

Belongs to the AB hydrolase superfamily.

Its subcellular location is the mitochondrion. It carries out the reaction ethanol + acetyl-CoA = ethyl acetate + CoA. The enzyme catalyses acetyl-CoA + H2O = acetate + CoA + H(+). The catalysed reaction is ethyl acetate + H2O = ethanol + acetate + H(+). Functionally, alcohol acetyltransferase that catalyzes the synthesis of ethyl acetate from ethanol and acetyl-CoA. Can also function as a thioesterase by hydrolyzing acetyl-CoA in the absence of ethanol, as well as esterase hydrolyzing ethyl acetate. The polypeptide is Ethanol acetyltransferase 1 (Saccharomyces cerevisiae (strain ATCC 204508 / S288c) (Baker's yeast)).